A 615-amino-acid chain; its full sequence is Alpha-terpinene synthase TPS33PK, chloroplastic (615 aa).

Residues 1-33 (MFCRLGVHQFSPLSLILNTTKLARASTLSSACY) constitute a chloroplast transit peptide. Positions 334, 371, 375, 513, and 516 each coordinate (2E)-geranyl diphosphate. Residues Val-371 and Leu-375 each contribute to the Mg(2+) site. A DDXXD motif motif is present at residues 371–375 (VYGTL). Mg(2+) contacts are provided by Ser-516, Met-520, and Asp-524.

The protein belongs to the terpene synthase family. Tpsb subfamily. Mg(2+) serves as cofactor. The cofactor is Mn(2+).

The protein resides in the plastid. It is found in the chloroplast. The enzyme catalyses (2E)-geranyl diphosphate = alpha-terpinene + diphosphate. The catalysed reaction is (2E)-geranyl diphosphate = gamma-terpinene + diphosphate. It functions in the pathway secondary metabolite biosynthesis; terpenoid biosynthesis. Involved in monoterpene (C10) olefins biosynthesis, constituants of cannabinoids and terpenoids-rich resins. Catalyzes mainly the conversion of (2E)-geranyl diphosphate to alpha-terpinene and gamma-terpinene. The protein is Alpha-terpinene synthase TPS33PK, chloroplastic of Cannabis sativa (Hemp).